We begin with the raw amino-acid sequence, 199 residues long: Ribonuclease HII (199 aa).

The RNase H type-2 domain occupies 9–198; that stretch reads QFVAGVDEVG…VRAAIEQMNL (190 aa). A divalent metal cation contacts are provided by Asp15, Glu16, and Asp107.

Belongs to the RNase HII family. It depends on Mn(2+) as a cofactor. Requires Mg(2+) as cofactor.

The protein resides in the cytoplasm. The catalysed reaction is Endonucleolytic cleavage to 5'-phosphomonoester.. Functionally, endonuclease that specifically degrades the RNA of RNA-DNA hybrids. This chain is Ribonuclease HII, found in Saccharophagus degradans (strain 2-40 / ATCC 43961 / DSM 17024).